Here is a 430-residue protein sequence, read N- to C-terminus: Aspartate aminotransferase, mitochondrial (430 aa).

Residues 1–28 (MALAMMIRNAASKRGMTPISGHFGGLRS) constitute a mitochondrion transit peptide. Residues Gly-65, Trp-160, and Asn-213 each coordinate L-aspartate. Residue Lys-277 is modified to N6-(pyridoxal phosphate)lysine. Arg-405 lines the L-aspartate pocket.

It belongs to the class-I pyridoxal-phosphate-dependent aminotransferase family. In terms of assembly, homodimer. Requires pyridoxal 5'-phosphate as cofactor.

The protein localises to the mitochondrion matrix. The enzyme catalyses L-aspartate + 2-oxoglutarate = oxaloacetate + L-glutamate. Functionally, amino acid aminotransferase important for the metabolism of amino acids and Krebs-cycle related organic acids. No activity with D-Asp or D-Ala as amino donors. In plants, it is involved in nitrogen metabolism and in aspects of carbon and energy metabolism. In Arabidopsis thaliana (Mouse-ear cress), this protein is Aspartate aminotransferase, mitochondrial (ASP1).